Reading from the N-terminus, the 83-residue chain is Small ribosomal subunit protein bS18A (83 aa).

Belongs to the bacterial ribosomal protein bS18 family. As to quaternary structure, part of the 30S ribosomal subunit. Forms a tight heterodimer with protein bS6.

Binds as a heterodimer with protein bS6 to the central domain of the 16S rRNA, where it helps stabilize the platform of the 30S subunit. This is Small ribosomal subunit protein bS18A from Mycolicibacterium vanbaalenii (strain DSM 7251 / JCM 13017 / BCRC 16820 / KCTC 9966 / NRRL B-24157 / PYR-1) (Mycobacterium vanbaalenii).